A 248-amino-acid chain; its full sequence is ATP synthase subunit a (248 aa).

Helical transmembrane passes span 31-51 (GQVLIASWIAIALILTVVILG), 90-110 (VPYVGTLFLFIFVSNWMGNLF), 129-149 (INTTAGLALLTSIMYFVAGIS), 195-215 (VIAVLVLLVPLFIPVPVMVLF), and 216-236 (LFTGAIQALIFSTLSAAYIGE).

Belongs to the ATPase A chain family. In terms of assembly, F-type ATPases have 2 components, CF(1) - the catalytic core - and CF(0) - the membrane proton channel. CF(1) has five subunits: alpha(3), beta(3), gamma(1), delta(1), epsilon(1). CF(0) has four main subunits: a, b, b' and c.

The protein resides in the cellular thylakoid membrane. Its function is as follows. Key component of the proton channel; it plays a direct role in the translocation of protons across the membrane. The sequence is that of ATP synthase subunit a from Synechococcus sp. (strain JA-2-3B'a(2-13)) (Cyanobacteria bacterium Yellowstone B-Prime).